The sequence spans 761 residues: MGSAAELTEPTTGTEKLHQPIEVEEDDEQIVDLERKTFRHGKGHDTSVDSSTITNTSSSSSSSFSGDGGTEETPDFHSNGDGEHTDLVNLEVPELETEIVFHQEHDDGKNCIVFFDGEQGSESAGAIPDAHEESQTADLNGEQTQLEPENGSTSEDNERSREIEEVLDGDVSKDLDAVDPLAGEVIEEEVDFEDVEYHDVENMMDKQETHDLYCPNCDSCITKKVILKRRKRKIRRHELGDSKRPHLTEPLFHSEDNLPSLDGGENSANESFVFKCLSCFTIFIPKGVSSKPIPPRQGVEGLKIQPNPQVEATGDSNWFSSIFGLNKKESAIQQGGASSSVLEANPPPRESIVPVVNPSRGNLSPMRKDTTGSAVVQPDAATSIQVAKSNDTSEIVNNGAIVGDGQKFLAPMVEEQTQQKIDNDDSSTADGNHTSDKGRLSPIQPSHGMSILNTVTNGPDGLKVETTIHEEGAPLLFEGKDTPDTSTADFGLTKVTGVMDTGDRGVITGPANPEIDISAGNLLEEGSLREPLMRRVVVQGRKLEILKSIVYGGLLEAITSLGVISSAAGSGASMLNILVLGLANLLGGLILIIHNLQELREEEPIRTTTEDNQTNGREEEEGRYKRLLGRRENFTLHATVAILSFIITGILPPVVYYFSFSEKHNKDYKVASVFGASLFCIVLLAIAKAHVRYPRGSYLKSILYYGSIAVSVSGISYVVGNFLEQLLEKHGWSDGSETPVGQMMLSSLMGRKAGFGYSSSY.

Disordered stretches follow at residues 1–85 and 120–162; these read MGSA…GEHT and GSES…RSRE. Residues 22–31 show a composition bias toward acidic residues; it reads EVEEDDEQIV. Residues 48 to 65 show a composition bias toward low complexity; the sequence is VDSSTITNTSSSSSSSFS. A compositionally biased stretch (basic and acidic residues) spans 74–85; sequence PDFHSNGDGEHT. Residues 136–154 show a composition bias toward polar residues; the sequence is TADLNGEQTQLEPENGSTS. Positions 186–206 form a coiled coil; the sequence is IEEEVDFEDVEYHDVENMMDK. 2 disordered regions span residues 338 to 374 and 416 to 448; these read SSSV…TGSA and QTQQ…PSHG. Over residues 416–432 the composition is skewed to polar residues; it reads QTQQKIDNDDSSTADGN. 5 helical membrane-spanning segments follow: residues 549-569, 573-593, 640-660, 670-690, and 702-722; these read IVYG…SAAG, SMLN…ILII, VAIL…YFSF, VASV…AKAH, and ILYY…VGNF.

The protein belongs to the CCC1 family.

The protein resides in the endoplasmic reticulum membrane. Not essential for the accumulation of ER body components, including PYK10. In Arabidopsis thaliana (Mouse-ear cress), this protein is Membrane protein of ER body-like protein (MEBL).